Reading from the N-terminus, the 1323-residue chain is ABC transporter gloK (1323 aa).

A run of 7 helical transmembrane segments spans residues 6–26 (AIAS…TLEA), 102–122 (PHAL…AGIL), 138–158 (VAYG…VMST), 217–237 (IWAS…RLGV), 240–260 (VAAV…VFGF), 325–345 (LLVG…VFAF), and 359–379 (PLLA…GQAV). The region spanning 142–380 (LIAAYAIVYI…IFSLLGQAVS (239 aa)) is the ABC transmembrane type-1 1 domain. The region spanning 471–697 (IRDCSACWSK…SSYLESLGTR (227 aa)) is the ABC transporter 1 domain. Residue 503–510 (GPIGSGKS) coordinates ATP. 7 consecutive transmembrane segments (helical) span residues 748 to 768 (GWVT…GLVF), 795 to 815 (YALW…WLMI), 821 to 841 (AAIQ…LVYF), 859 to 879 (LIDM…LSCI), 891 to 910 (YVAA…QLFY), 976 to 996 (LNLT…SIAL), and 1006 to 1026 (IGVA…LVYT). Positions 752-1031 (WWVFVLLCSG…TLVYTWTSLE (280 aa)) constitute an ABC transmembrane type-1 2 domain. The 232-residue stretch at 1069–1300 (IRFQSVSAAY…PSFFASLLKA (232 aa)) folds into the ABC transporter 2 domain. Position 1103–1110 (1103–1110 (GRTGSGKS)) interacts with ATP.

This sequence belongs to the ABC transporter superfamily. ABCC family. Conjugate transporter (TC 3.A.1.208) subfamily.

It localises to the cell membrane. Functionally, 3-isopropylmalate dehydratase large subunit; part of the gene cluster that mediates the biosynthesis of pneumocandins, lipohexapeptides of the echinocandin family that prevent fungal cell wall formation by non-competitive inhibition of beta-1,3-glucan synthase. Possibly secretes antifungal pneumocandins, thus avoiding of intracellular accumulation and ameliorating the toxicity to the producing cells. This is ABC transporter gloK from Glarea lozoyensis (strain ATCC 20868 / MF5171).